Here is a 239-residue protein sequence, read N- to C-terminus: Serine protease SplF (239 aa).

The signal sequence occupies residues 1-36 (MNKNIIIKSIAALTILTSITGVGTTVVDGIQQTAKA). Active-site charge relay system residues include His-75, Asp-114, and Ser-192.

It belongs to the peptidase S1B family.

Its subcellular location is the secreted. In Staphylococcus aureus (strain MSSA476), this protein is Serine protease SplF (splF).